The primary structure comprises 493 residues: Sodium-coupled neutral amino acid symporter 2 (493 aa).

The Cytoplasmic portion of the chain corresponds to 1–72; sequence MNNAEVLNVA…LPGTTSFGMS (72 aa). Residues 1–92 form a regulates protein turnover upon amino acid deprivation region; it reads MNNAEVLNVA…SGILGLSYAM (92 aa). The chain crosses the membrane as a helical span at residues 73–92; it reads VFNLSNAIVGSGILGLSYAM. Na(+) is bound at residue N78. Residues 93-98 lie on the Extracellular side of the membrane; sequence ANTGIA. Residues 99 to 119 form a helical membrane-spanning segment; that stretch reads LFMILLVFVTVFSLYSIHLLL. Residues 120 to 154 are Cytoplasmic-facing; that stretch reads KTANEGGSLLYEQLGLKAFGIPGKLAASGSVTLQN. A helical transmembrane segment spans residues 155–173; it reads IGAMSSYLYIVKYELPLVI. Over 174-184 the chain is Extracellular; it reads KALMDIKESNG. Residues 185-205 form a helical membrane-spanning segment; it reads EWYLNGDYLVIMVSLAIILPL. Residues 206–213 lie on the Cytoplasmic side of the membrane; sequence SLLRNLGY. The chain crosses the membrane as a helical span at residues 214–234; sequence LGYTSGFSPLCMVFFLIVVIY. The Extracellular portion of the chain corresponds to 235–279; it reads KKFEIPCPLEAMNMTSNSSSHDHMAHNETDDEMCKPKYFVFNSQT. The cysteines at positions 241 and 268 are disulfide-linked. N-linked (GlcNAc...) asparagine glycans are attached at residues N247, N251, and N261. Residues 280 to 300 form a helical membrane-spanning segment; that stretch reads VYAVPILTFSFVCHPAVLPIY. Over 301–316 the chain is Cytoplasmic; that stretch reads QELKGRSRRRMMNVSN. Residues 317 to 337 form a helical membrane-spanning segment; sequence VSFFAMFIMYLLAALFGYLTF. Topologically, residues 338–358 are extracellular; sequence YSKVEPELLHTYSKVFGAGVI. The helical transmembrane segment at 359–379 threads the bilayer; it reads FVVVRLAVLMAVTLTVPIVIF. Position 373 (T373) interacts with Na(+). The Cytoplasmic portion of the chain corresponds to 380–400; the sequence is PIRSSLNELFCSGKDFAWIRH. A helical transmembrane segment spans residues 401–421; that stretch reads ILITFLILAFTNVLVIFVPTI. Topologically, residues 422–423 are extracellular; sequence RD. A helical membrane pass occupies residues 424 to 444; it reads IFGFIGASAAAMLVFILPSAF. Over 445-459 the chain is Cytoplasmic; the sequence is YIRLVKKESMKSVQK. The helical transmembrane segment at 460 to 482 threads the bilayer; the sequence is IGALLFLIGGIIVMIGSMTLIIL. The Extracellular segment spans residues 483 to 493; it reads DWIHNSTSGGN.

Belongs to the amino acid/polyamine transporter 2 family.

Its subcellular location is the cell membrane. The catalysed reaction is L-alanine(in) + Na(+)(in) = L-alanine(out) + Na(+)(out). It carries out the reaction glycine(in) + Na(+)(in) = glycine(out) + Na(+)(out). It catalyses the reaction L-serine(in) + Na(+)(in) = L-serine(out) + Na(+)(out). The enzyme catalyses L-proline(in) + Na(+)(in) = L-proline(out) + Na(+)(out). The catalysed reaction is L-methionine(in) + Na(+)(in) = L-methionine(out) + Na(+)(out). It carries out the reaction L-histidine(in) + Na(+)(in) = L-histidine(out) + Na(+)(out). It catalyses the reaction L-asparagine(in) + Na(+)(in) = L-asparagine(out) + Na(+)(out). The enzyme catalyses L-glutamine(in) + Na(+)(in) = L-glutamine(out) + Na(+)(out). The catalysed reaction is L-threonine(in) + Na(+)(in) = L-threonine(out) + Na(+)(out). It carries out the reaction L-leucine(in) + Na(+)(in) = L-leucine(out) + Na(+)(out). It catalyses the reaction L-phenylalanine(in) + Na(+)(in) = L-phenylalanine(out) + Na(+)(out). Its activity is regulated as follows. Inhibited by N-methyl-D-glucamine. Inhibited by choline. Allosteric regulation of sodium ions binding by pH. In terms of biological role, symporter that cotransports neutral amino acids and sodium ions from the extracellular to the intracellular side of the cell membrane. The transport is pH-sensitive, Li(+)-intolerant, electrogenic, driven by the Na(+) electrochemical gradient and cotransports of neutral amino acids and sodium ions with a stoichiometry of 1:1. In Xenopus tropicalis (Western clawed frog), this protein is Sodium-coupled neutral amino acid symporter 2.